The following is a 271-amino-acid chain: Aspartate/glutamate leucyltransferase (271 aa).

The protein belongs to the R-transferase family. Bpt subfamily.

It localises to the cytoplasm. It catalyses the reaction N-terminal L-glutamyl-[protein] + L-leucyl-tRNA(Leu) = N-terminal L-leucyl-L-glutamyl-[protein] + tRNA(Leu) + H(+). The enzyme catalyses N-terminal L-aspartyl-[protein] + L-leucyl-tRNA(Leu) = N-terminal L-leucyl-L-aspartyl-[protein] + tRNA(Leu) + H(+). Its function is as follows. Functions in the N-end rule pathway of protein degradation where it conjugates Leu from its aminoacyl-tRNA to the N-termini of proteins containing an N-terminal aspartate or glutamate. The polypeptide is Aspartate/glutamate leucyltransferase (Acinetobacter baumannii (strain SDF)).